Here is a 175-residue protein sequence, read N- to C-terminus: Small ribosomal subunit protein uS7 (175 aa).

The protein belongs to the universal ribosomal protein uS7 family. As to quaternary structure, part of the 30S ribosomal subunit. Contacts proteins S9 and S11.

Its function is as follows. One of the primary rRNA binding proteins, it binds directly to 16S rRNA where it nucleates assembly of the head domain of the 30S subunit. Is located at the subunit interface close to the decoding center, probably blocks exit of the E-site tRNA. This Legionella pneumophila (strain Paris) protein is Small ribosomal subunit protein uS7.